The sequence spans 51 residues: Large ribosomal subunit protein eL39 (51 aa).

A disordered region spans residues 1-23 (MPSQKSFRTKQKLAKAQKQNRPL).

It belongs to the eukaryotic ribosomal protein eL39 family. In terms of assembly, component of the large ribosomal subunit. Mature ribosomes consist of a small (40S) and a large (60S) subunit. The 40S subunit contains about 32 different proteins and 1 molecule of RNA (18S). The 60S subunit contains 45 different proteins and 3 molecules of RNA (25S, 5.8S and 5S).

The protein resides in the cytoplasm. Component of the ribosome, a large ribonucleoprotein complex responsible for the synthesis of proteins in the cell. The small ribosomal subunit (SSU) binds messenger RNAs (mRNAs) and translates the encoded message by selecting cognate aminoacyl-transfer RNA (tRNA) molecules. The large subunit (LSU) contains the ribosomal catalytic site termed the peptidyl transferase center (PTC), which catalyzes the formation of peptide bonds, thereby polymerizing the amino acids delivered by tRNAs into a polypeptide chain. The nascent polypeptides leave the ribosome through a tunnel in the LSU and interact with protein factors that function in enzymatic processing, targeting, and the membrane insertion of nascent chains at the exit of the ribosomal tunnel. This is Large ribosomal subunit protein eL39 from Candida albicans (strain SC5314 / ATCC MYA-2876) (Yeast).